An 80-amino-acid polypeptide reads, in one-letter code: Protein CEBPZOS (80 aa).

Residues 15-32 form a helical membrane-spanning segment; sequence GVLVAELVGVFGAYFLFS.

The protein localises to the mitochondrion membrane. The protein is Protein CEBPZOS of Homo sapiens (Human).